The chain runs to 147 residues: Anti-sigma F factor (147 aa).

It belongs to the anti-sigma-factor family.

The enzyme catalyses L-seryl-[protein] + ATP = O-phospho-L-seryl-[protein] + ADP + H(+). The catalysed reaction is L-threonyl-[protein] + ATP = O-phospho-L-threonyl-[protein] + ADP + H(+). Binds to sigma F and blocks its ability to form an RNA polymerase holoenzyme (E-sigma F). Phosphorylates SpoIIAA on a serine residue. This phosphorylation may enable SpoIIAA to act as an anti-anti-sigma factor that counteracts SpoIIAB and thus releases sigma F from inhibition. This Priestia megaterium (Bacillus megaterium) protein is Anti-sigma F factor.